Reading from the N-terminus, the 874-residue chain is Valine--tRNA ligase (874 aa).

Positions 42 to 52 (PNITGRIHIGH) match the 'HIGH' region motif. Positions 522–526 (KMSKS) match the 'KMSKS' region motif. K525 contacts ATP. Positions 806–874 (DYIDIDTEKQ…KLQALLKEIS (69 aa)) form a coiled coil.

The protein belongs to the class-I aminoacyl-tRNA synthetase family. ValS type 1 subfamily. Monomer.

The protein localises to the cytoplasm. It carries out the reaction tRNA(Val) + L-valine + ATP = L-valyl-tRNA(Val) + AMP + diphosphate. Its function is as follows. Catalyzes the attachment of valine to tRNA(Val). As ValRS can inadvertently accommodate and process structurally similar amino acids such as threonine, to avoid such errors, it has a 'posttransfer' editing activity that hydrolyzes mischarged Thr-tRNA(Val) in a tRNA-dependent manner. The protein is Valine--tRNA ligase of Petrotoga mobilis (strain DSM 10674 / SJ95).